The following is a 586-amino-acid chain: Kelch-like protein 7 (586 aa).

The region spanning 44 to 111 is the BTB domain; sequence CDVILTVQER…AYTARISVNS (68 aa). The BACK domain maps to 146–248; sequence CLGISVLAEC…SKNFLSKTVQ (103 aa). 6 Kelch repeats span residues 294 to 336, 337 to 382, 383 to 430, 431 to 481, 483 to 528, and 530 to 575; these read RIAL…FWDN, VVYI…AAEG, KIYT…EANG, LIYV…FVKD, IFAV…AVGS, and IYVL…CVVD.

In terms of assembly, homodimer. Component of the BCR(KLHL7) E3 ubiquitin ligase complex, at least composed of CUL3 and KLHL7 and RBX1.

It localises to the nucleus. Its subcellular location is the cytoplasm. It functions in the pathway protein modification; protein ubiquitination. Functionally, substrate-specific adapter of a BCR (BTB-CUL3-RBX1) E3 ubiquitin ligase complex. The BCR(KLHL7) complex acts by mediating ubiquitination and subsequent degradation of substrate proteins. Probably mediates 'Lys-48'-linked ubiquitination. The polypeptide is Kelch-like protein 7 (Klhl7) (Mus musculus (Mouse)).